Consider the following 328-residue polypeptide: Ribosomal RNA small subunit methyltransferase H (328 aa).

S-adenosyl-L-methionine is bound by residues 37-39 (GGH), Asp57, Phe83, Asp104, and Gln111.

This sequence belongs to the methyltransferase superfamily. RsmH family.

It localises to the cytoplasm. The enzyme catalyses cytidine(1402) in 16S rRNA + S-adenosyl-L-methionine = N(4)-methylcytidine(1402) in 16S rRNA + S-adenosyl-L-homocysteine + H(+). Its function is as follows. Specifically methylates the N4 position of cytidine in position 1402 (C1402) of 16S rRNA. In Neisseria meningitidis serogroup A / serotype 4A (strain DSM 15465 / Z2491), this protein is Ribosomal RNA small subunit methyltransferase H.